Here is a 181-residue protein sequence, read N- to C-terminus: Thymidine kinase (181 aa).

ATP is bound at residue 13–20 (GPMFSGKS). Glutamate 85 (proton acceptor) is an active-site residue. Phenylalanine 115 is a binding site for substrate. Positions 140 and 143 each coordinate Zn(2+). 159–163 (IEIIG) contributes to the substrate binding site. Residues cysteine 172 and cysteine 175 each coordinate Zn(2+).

This sequence belongs to the thymidine kinase family.

It catalyses the reaction thymidine + ATP = dTMP + ADP + H(+). The polypeptide is Thymidine kinase (TK) (Yaba monkey tumor virus (strain VR587) (YMTV)).